Reading from the N-terminus, the 407-residue chain is Multifunctional CCA protein (407 aa).

Glycine 8 and arginine 11 together coordinate ATP. CTP contacts are provided by glycine 8 and arginine 11. The Mg(2+) site is built by aspartate 21 and aspartate 23. ATP contacts are provided by arginine 91, arginine 137, and arginine 140. Positions 91, 137, and 140 each coordinate CTP. Residues 228 to 329 enclose the HD domain; sequence TGIHTLLVAE…VKIFNKLDVW (102 aa).

Belongs to the tRNA nucleotidyltransferase/poly(A) polymerase family. Bacterial CCA-adding enzyme type 1 subfamily. Monomer. Can also form homodimers and oligomers. Mg(2+) is required as a cofactor. It depends on Ni(2+) as a cofactor.

The enzyme catalyses a tRNA precursor + 2 CTP + ATP = a tRNA with a 3' CCA end + 3 diphosphate. It carries out the reaction a tRNA with a 3' CCA end + 2 CTP + ATP = a tRNA with a 3' CCACCA end + 3 diphosphate. Functionally, catalyzes the addition and repair of the essential 3'-terminal CCA sequence in tRNAs without using a nucleic acid template. Adds these three nucleotides in the order of C, C, and A to the tRNA nucleotide-73, using CTP and ATP as substrates and producing inorganic pyrophosphate. tRNA 3'-terminal CCA addition is required both for tRNA processing and repair. Also involved in tRNA surveillance by mediating tandem CCA addition to generate a CCACCA at the 3' terminus of unstable tRNAs. While stable tRNAs receive only 3'-terminal CCA, unstable tRNAs are marked with CCACCA and rapidly degraded. The chain is Multifunctional CCA protein from Vibrio vulnificus (strain CMCP6).